Reading from the N-terminus, the 2442-residue chain is Histone lysine acetyltransferase CREBBP (2442 aa).

Disordered stretches follow at residues 1 to 40 and 74 to 168; these read MAEN…ENDL and RGGS…PATS. A2 is subject to N-acetylalanine. Polar residues predominate over residues 20 to 30; sequence PGFSANDSTDF. Phosphoserine is present on S120. The span at 125–168 shows a compositional bias: polar residues; the sequence is GDSSTPSLPKQAASTSGPTPPASQALNPQAQKQVGLVTSSPATS. At R219 the chain carries Omega-N-methylarginine. The interaction with SRCAP stretch occupies residues 226–409; sequence PAPAMQGATS…GKACQVAHCA (184 aa). Residues 261–272 show a composition bias toward low complexity; sequence GGMTKMGMTGNT. The disordered stretch occupies residues 261–290; that stretch reads GGMTKMGMTGNTSPFGQPFSQTGGQPMGAT. The segment covering 273–284 has biased composition (polar residues); that stretch reads SPFGQPFSQTGG. The TAZ-type 1 zinc-finger motif lies at 346-432; it reads DPEKRKLIQQ…RHDCPVCLPL (87 aa). Zn(2+) contacts are provided by H362, C366, C379, C384, H393, C397, C403, C408, H417, C421, C426, and C429. The KIX domain maps to 586-665; it reads GVRKGWHEHV…KIYKIQKELE (80 aa). 2 positions are modified to asymmetric dimethylarginine: R600 and R624. K656 bears the N6-acetyllysine mark. The span at 792-825 shows a compositional bias: polar residues; sequence FLPQNQFPSSSGAMSVNSVGMGQPATQAGVSQGQ. The segment at 792-1084 is disordered; sequence FLPQNQFPSS…STSPSQPRKK (293 aa). Pro residues-rich tracts occupy residues 846–862 and 874–887; these read PCPP…PPPA and PTPP…PAAP. A compositionally biased stretch (polar residues) spans 894-906; sequence VSSGQTPTPTPGS. 2 stretches are compositionally biased toward low complexity: residues 909–930 and 938–957; these read SAAQ…VTPQ and PSVA…HTQP. Over residues 974 to 989 the composition is skewed to polar residues; it reads PTPSSVTSAETSSQQP. K999 participates in a covalent cross-link: Glycyl lysine isopeptide (Lys-Gly) (interchain with G-Cter in SUMO1). Over residues 1012–1022 the composition is skewed to basic and acidic residues; the sequence is AESKGEPRSEM. An N6-acetyllysine modification is found at K1015. Residue S1031 is modified to Phosphoserine. The span at 1033-1060 shows a compositional bias: basic and acidic residues; sequence VKEETDTTEQKSEPMEVEEKKPEVKVEA. Residues K1034 and K1057 each participate in a glycyl lysine isopeptide (Lys-Gly) (interchain with G-Cter in SUMO1) cross-link. Over residues 1067 to 1080 the composition is skewed to polar residues; it reads SANGTASQSTSPSQ. S1077 carries the phosphoserine modification. The Bromo domain occupies 1086-1193; it reads FKPEELRQAL…EVFEQEIDPV (108 aa). The interval 1125–1171 is interaction with histone; it reads DYFDIVKNPMDLSTIKRKLDTGQYQEPWQYVDDVWLMFNNAWLYNRK. The interaction with ASF1A stretch occupies residues 1163–1181; it reads NNAWLYNRKTSRVYKFCSK. Residue K1217 is modified to N6-acetyllysine. The CBP/p300-type HAT domain maps to 1324 to 1701; sequence KFSAKRLQTT…MLVELHTQGQ (378 aa). S1383 and S1387 each carry phosphoserine; by IKKA. The interaction with histone stretch occupies residues 1434–1436; sequence YLD. Acetyl-CoA is bound by residues 1435–1437, 1447–1448, I1494, R1499, and W1503; these read LDS and RT. Residues 1548–1575 adopt a coiled-coil conformation; that stretch reads NVLEESIKELEQEEEERKKEESTAASET. Residues 1557–1569 show a composition bias toward basic and acidic residues; that stretch reads LEQEEEERKKEES. Positions 1557-1616 are disordered; the sequence is LEQEEEERKKEESTAASETPEGSQGDSKNAKKKNNKKTNKNKSSISRANKKKPSMPNVSN. N6-acetyllysine is present on residues K1584, K1592, K1593, K1596, and K1598. The span at 1586–1596 shows a compositional bias: basic residues; it reads AKKKNNKKTNK. The ZZ-type zinc finger occupies 1703 to 1751; it reads RFVYTCNECKHHVETRWHCTVCEDYDLCINCYNTKSHTHKMVKWGLGLD. 8 residues coordinate Zn(2+): C1708, C1711, C1721, C1724, C1730, C1733, H1739, and H1741. N6-acetyllysine is present on residues K1742 and K1745. S1764 carries the post-translational modification Phosphoserine. Residues 1766 to 1847 form a TAZ-type 2 zinc finger; that stretch reads QESRRLSIQR…KCPVPFCLNI (82 aa). The disordered stretch occupies residues 1875–1960; it reads TRNVPQQSLP…QPPPAAVEAA (86 aa). 2 stretches are compositionally biased toward pro residues: residues 1901-1913 and 1944-1955; these read PQTP…PQPS and PAPPPPAQPPPA. Phosphoserine occurs at positions 2064, 2077, and 2080. Residues 2112-2421 form a disordered region; sequence NQPGMQPQPG…LNTPNRSALS (310 aa). Composition is skewed to low complexity over residues 2113–2138, 2197–2217, 2261–2280, and 2287–2305; these read QPGM…HQQP, QLLQ…QQQQ, MGQM…PGLG, and IQQA…KQQI. Polar residues-rich tracts occupy residues 2315-2327 and 2334-2343; these read SPQQ…QPQA and QIATSLSNQV. Over residues 2349–2372 the composition is skewed to pro residues; the sequence is VQSPRPQSQPPHSSPSPRIQPQPS. S2351 bears the Phosphoserine mark. Residues 2411 to 2421 are compositionally biased toward polar residues; it reads QLNTPNRSALS.

In terms of assembly, part of a complex composed of MSX3, CREBBP/CBP AND EP300/p300; the interaction with MSX3 decreases histone acetylation activity. Found in a complex containing NCOA2; NCOA3; IKKA; IKKB and IKBKG. Probably part of a complex with HIF1A and EP300. Interacts with phosphorylated CREB1. Interacts with the C-terminal region of CITED4. The TAZ-type 1 domain interacts with HIF1A. Interacts with SRCAP, CARM1, ELF3, MLLT7/FOXO4, N4BP2, NCOA1, NCOA3, NCOA6, PCAF, DDX5, DDX17, PELP1, PML, SMAD1, SMAD2, SMAD3, SPIB, TRERF1 and ZCCHC12. Interacts with KLF1; the interaction results in acetylation and enhancement of transcriptional activity of KLF1. Interacts with DAXX; the interaction is dependent on CBP sumoylation and results in suppression of the transcriptional activity via recruitment of HDAC2 to DAXX. Interacts with MAF. Interacts with MTDH. Interacts with MAFG; the interaction acetylates MAFG in the basic region and stimulates NFE2 transcriptional activity through increasing its DNA-binding activity. Interacts with IRF2; the interaction acetylates IRF2 and regulates its activity on the H4 promoter. Interacts (via N-terminus) with SS18L1/CREST (via C-terminus). Interacts with IRF3 (when phosphorylated); forming the dsRNA-activated factor 1 (DRAF1), a complex which activates the transcription of the type I interferon genes. Interacts with MECOM. Interacts with CITED1 (via C-terminus) Interacts with GATA1; the interaction results in acetylation and enhancement of transcriptional activity of GATA1. Interacts with FOXO1; the interaction acetylates FOXO1 and inhibits its transcriptional activity. Interacts with NPAS2, CLOCK and BMAL1. Interacts with ASF1A and ASF1B; this promotes histone acetylation. Interacts with acetylated TP53/p53 and with the acetylated histones H3 and H4. Interacts (via transactivation domain and C-terminus) with PCNA; the interaction occurs on chromatin in UV-irradiated damaged cells. Interacts with DHX9 (via N-terminus); this interaction mediates association with RNA polymerase II holoenzyme and stimulates CREB-dependent transcriptional activation. Interacts with SMAD4; negatively regulated by ZBTB7A. Forms a complex with KMT2A and CREB1. Interacts with DDX3X; this interaction may facilitate HNF4A acetylation. Interacts with MSX1; the interaction may inhibit MSX1 autoinactivation. Interacts with MSX3. Interacts with ACSS2. Post-translationally, methylation of the KIX domain by CARM1 blocks association with CREB. This results in the blockade of CREB signaling, and in activation of apoptotic response. Phosphorylated by CHUK/IKKA at Ser-1383 and Ser-1387; these phosphorylations promote cell growth by switching the binding preference of CREBBP from TP53 to NF-kappa-B. In terms of processing, sumoylation negatively regulates transcriptional activity via the recruitment of DAAX. Post-translationally, autoacetylation is required for binding to protein substrates, such as acetylated histones and acetylated TP53/p53. Autoacetylation is induced by glucose and fatty acids. In terms of tissue distribution, expressed in hypothalamus and cortex.

It is found in the cytoplasm. Its subcellular location is the nucleus. It catalyses the reaction L-lysyl-[histone] + acetyl-CoA = N(6)-acetyl-L-lysyl-[histone] + CoA + H(+). It carries out the reaction L-lysyl-[protein] + acetyl-CoA = N(6)-acetyl-L-lysyl-[protein] + CoA + H(+). The catalysed reaction is (S)-lactoyl-CoA + L-lysyl-[protein] = N(6)-[(S)-lactoyl]-L-lysyl-[protein] + CoA + H(+). In terms of biological role, acetylates histones, giving a specific tag for transcriptional activation. Mediates acetylation of histone H3 at 'Lys-18' and 'Lys-27' (H3K18ac and H3K27ac, respectively). Also acetylates non-histone proteins, like DDX21, FBL, IRF2, MAFG, NCOA3, POLR1E/PAF53 and FOXO1. Binds specifically to phosphorylated CREB and enhances its transcriptional activity toward cAMP-responsive genes. Acts as a coactivator of ALX1. Acts as a circadian transcriptional coactivator which enhances the activity of the circadian transcriptional activators: NPAS2-BMAL1 and CLOCK-BMAL1 heterodimers. Acetylates PCNA; acetylation promotes removal of chromatin-bound PCNA and its degradation during nucleotide excision repair (NER). Acetylates POLR1E/PAF53, leading to decreased association of RNA polymerase I with the rDNA promoter region and coding region. Acetylates DDX21, thereby inhibiting DDX21 helicase activity. Acetylates FBL, preventing methylation of 'Gln-105' of histone H2A (H2AQ104me). In addition to protein acetyltransferase, can use different acyl-CoA substrates, such as lactoyl-CoA, and is able to mediate protein lactylation. Catalyzes lactylation of MRE11 in response to DNA damage, thereby promoting DNA double-strand breaks (DSBs) via homologous recombination (HR). Functions as a transcriptional coactivator for SMAD4 in the TGF-beta signaling pathway. The sequence is that of Histone lysine acetyltransferase CREBBP (Crebbp) from Rattus norvegicus (Rat).